The primary structure comprises 345 residues: Phosphoribosylformylglycinamidine cyclo-ligase (345 aa).

It belongs to the AIR synthase family.

The protein resides in the cytoplasm. The enzyme catalyses 2-formamido-N(1)-(5-O-phospho-beta-D-ribosyl)acetamidine + ATP = 5-amino-1-(5-phospho-beta-D-ribosyl)imidazole + ADP + phosphate + H(+). It functions in the pathway purine metabolism; IMP biosynthesis via de novo pathway; 5-amino-1-(5-phospho-D-ribosyl)imidazole from N(2)-formyl-N(1)-(5-phospho-D-ribosyl)glycinamide: step 2/2. This chain is Phosphoribosylformylglycinamidine cyclo-ligase, found in Mannheimia succiniciproducens (strain KCTC 0769BP / MBEL55E).